A 134-amino-acid polypeptide reads, in one-letter code: Phosphoribosyl-ATP pyrophosphatase 2 (134 aa).

It belongs to the PRA-PH family.

The protein resides in the cytoplasm. The enzyme catalyses 1-(5-phospho-beta-D-ribosyl)-ATP + H2O = 1-(5-phospho-beta-D-ribosyl)-5'-AMP + diphosphate + H(+). The protein operates within amino-acid biosynthesis; L-histidine biosynthesis; L-histidine from 5-phospho-alpha-D-ribose 1-diphosphate: step 2/9. This Bradyrhizobium diazoefficiens (strain JCM 10833 / BCRC 13528 / IAM 13628 / NBRC 14792 / USDA 110) protein is Phosphoribosyl-ATP pyrophosphatase 2 (hisE2).